The sequence spans 45 residues: uncharacterized protein (45 aa).

A helical transmembrane segment spans residues 15 to 37; sequence EVVGTLMAVLITFALVAVVFNFI.

Its subcellular location is the membrane. This is an uncharacterized protein from Archaeoglobus fulgidus (strain ATCC 49558 / DSM 4304 / JCM 9628 / NBRC 100126 / VC-16).